The sequence spans 190 residues: Threonylcarbamoyl-AMP synthase (190 aa).

Residues Ile7–Gly190 form the YrdC-like domain.

The protein belongs to the SUA5 family. TsaC subfamily.

It is found in the cytoplasm. It catalyses the reaction L-threonine + hydrogencarbonate + ATP = L-threonylcarbamoyladenylate + diphosphate + H2O. Required for the formation of a threonylcarbamoyl group on adenosine at position 37 (t(6)A37) in tRNAs that read codons beginning with adenine. Catalyzes the conversion of L-threonine, HCO(3)(-)/CO(2) and ATP to give threonylcarbamoyl-AMP (TC-AMP) as the acyladenylate intermediate, with the release of diphosphate. The chain is Threonylcarbamoyl-AMP synthase from Salmonella typhimurium (strain LT2 / SGSC1412 / ATCC 700720).